A 2078-amino-acid chain; its full sequence is Autophagy-related protein 2 homolog B (2078 aa).

The 96-residue stretch at 13 to 108 (ACRYLLQRYL…EMVFRPRPRP (96 aa)) folds into the Chorein N-terminal domain. 2 positions are modified to phosphoserine: serine 255 and serine 379. Residues 473–495 (GSTFPSNLVHPTPLQKTSLPSRS) are disordered. Over residues 486–495 (LQKTSLPSRS) the composition is skewed to polar residues. Serine 497, serine 840, serine 886, serine 899, and serine 1008 each carry phosphoserine. The tract at residues 868–888 (EEEENDGHYQEEEEGGAHSLK) is disordered. A compositionally biased stretch (basic and acidic residues) spans 873–888 (DGHYQEEEEGGAHSLK). Phosphotyrosine is present on tyrosine 1012. Phosphoserine occurs at positions 1016 and 1018. The residue at position 1022 (threonine 1022) is a Phosphothreonine. A disordered region spans residues 1375–1405 (ADMKPGAFQRRSKVDSSGRSSSRGPVLPEAD). Serine 1526 carries the phosphoserine modification.

The protein belongs to the ATG2 family. In terms of assembly, interacts with WDR45/WIPI4.

The protein resides in the preautophagosomal structure membrane. The protein localises to the lipid droplet. Its subcellular location is the endoplasmic reticulum membrane. The enzyme catalyses a 1,2-diacyl-sn-glycero-3-phospho-L-serine(in) = a 1,2-diacyl-sn-glycero-3-phospho-L-serine(out). It catalyses the reaction a 1,2-diacyl-sn-glycero-3-phosphoethanolamine(in) = a 1,2-diacyl-sn-glycero-3-phosphoethanolamine(out). Its function is as follows. Lipid transfer protein required for both autophagosome formation and regulation of lipid droplet morphology and dispersion. Tethers the edge of the isolation membrane (IM) to the endoplasmic reticulum (ER) and mediates direct lipid transfer from ER to IM for IM expansion. Binds to the ER exit site (ERES), which is the membrane source for autophagosome formation, and extracts phospholipids from the membrane source and transfers them to ATG9 (ATG9A or ATG9B) to the IM for membrane expansion. Lipid transfer activity is enhanced by WDR45/WIPI4, which promotes ATG2B-association with phosphatidylinositol 3-monophosphate (PI3P)-containing membranes. The protein is Autophagy-related protein 2 homolog B of Homo sapiens (Human).